The chain runs to 107 residues: Phosphoribosyl-ATP pyrophosphatase (107 aa).

Belongs to the PRA-PH family.

Its subcellular location is the cytoplasm. It catalyses the reaction 1-(5-phospho-beta-D-ribosyl)-ATP + H2O = 1-(5-phospho-beta-D-ribosyl)-5'-AMP + diphosphate + H(+). It functions in the pathway amino-acid biosynthesis; L-histidine biosynthesis; L-histidine from 5-phospho-alpha-D-ribose 1-diphosphate: step 2/9. The sequence is that of Phosphoribosyl-ATP pyrophosphatase from Zymomonas mobilis subsp. mobilis (strain ATCC 31821 / ZM4 / CP4).